We begin with the raw amino-acid sequence, 458 residues long: Peptidyl-prolyl cis-trans isomerase FKBP4 (458 aa).

M1 is modified (N-acetylmethionine; in peptidyl-prolyl cis-trans isomerase FKBP4; alternate). A disordered region spans residues 1–24 (MTAEEMKAAENGAQSAPLPLEGVD). At T2 the chain carries N-acetylthreonine; in peptidyl-prolyl cis-trans isomerase FKBP4, N-terminally processed; partial. In terms of domain architecture, PPIase FKBP-type 1 spans 50 to 138 (GDRVFVHYTG…VFEVELFEFK (89 aa)). At T143 the chain carries Phosphothreonine; by CK2. Positions 167 to 253 (GAMVEVALEG…RYEVRLKSFE (87 aa)) constitute a PPIase FKBP-type 2 domain. Residue Y220 is modified to Phosphotyrosine. Residues 267 to 400 (LEQSNIVKER…TQLAVCQQRT (134 aa)) are interaction with tubulin. TPR repeat units follow at residues 270 to 303 (SNIVKERGTAYFKEGKYKQALLQYKKIVSWLEYE), 319 to 352 (LASHLNLAMCHLKLQAFSAAIESCNKALELDSNN), and 353 to 386 (EKGLFRRGEAHLAVNDFDLARADFQKVLQLYPSN). K282 bears the N6-acetyllysine mark. R373 bears the Omega-N-methylarginine mark. The segment at 428 to 458 (EVAAGDHPTDAEMKGERNNVAENQSRVETEA) is disordered. Residues 434-458 (HPTDAEMKGERNNVAENQSRVETEA) are compositionally biased toward basic and acidic residues. T436 is subject to Phosphothreonine. K441 is covalently cross-linked (Glycyl lysine isopeptide (Lys-Gly) (interchain with G-Cter in SUMO1)). At S452 the chain carries Phosphoserine.

Homodimer. Interacts with GLMN. Associates with HSP90AA1 and HSPA1A/HSPA1B in steroid hormone receptor complexes. Also interacts with peroxisomal phytanoyl-CoA alpha-hydroxylase (PHYH). Interacts with NR3C1 and dynein. Interacts with HSF1 in the HSP90 complex. Associates with tubulin. Interacts with MAPT/TAU. Interacts (via TPR domain) with S100A1, S100A2 and S100A6; the interaction is Ca(2+) dependent. Interaction with S100A1 and S100A2 (but not with S100A6) leads to inhibition of FKBP4-HSP90 interaction. Interacts with dynein; contributes to NR3C1 transport to the nucleus. In terms of processing, phosphorylation by CK2 results in loss of HSP90 binding activity.

Its subcellular location is the cytoplasm. The protein localises to the cytosol. The protein resides in the mitochondrion. It is found in the nucleus. It localises to the cytoskeleton. It carries out the reaction [protein]-peptidylproline (omega=180) = [protein]-peptidylproline (omega=0). Inhibited by FK506. In terms of biological role, immunophilin protein with PPIase and co-chaperone activities. Component of steroid receptors heterocomplexes through interaction with heat-shock protein 90 (HSP90). May play a role in the intracellular trafficking of heterooligomeric forms of steroid hormone receptors between cytoplasm and nuclear compartments. The isomerase activity controls neuronal growth cones via regulation of TRPC1 channel opening. Also acts as a regulator of microtubule dynamics by inhibiting MAPT/TAU ability to promote microtubule assembly. May have a protective role against oxidative stress in mitochondria. The chain is Peptidyl-prolyl cis-trans isomerase FKBP4 (Fkbp4) from Mus musculus (Mouse).